A 964-amino-acid polypeptide reads, in one-letter code: Vitamin B12-dependent ribonucleotide reductase (964 aa).

Positions 1–21 (MTETASGPARGSRAKGTKAKG) are disordered. The segment covering 12 to 21 (SRAKGTKAKG) has biased composition (basic residues). Substrate is bound by residues S142, 158-159 (AC), G187, 363-367 (NPCSE), and 553-557 (PTGTI). Cysteines 159 and 376 form a disulfide. N363 serves as the catalytic Proton acceptor. C365 serves as the catalytic Cysteine radical intermediate. E367 (proton acceptor) is an active-site residue.

The protein belongs to the ribonucleoside diphosphate reductase class-2 family. Requires adenosylcob(III)alamin as cofactor.

It catalyses the reaction a 2'-deoxyribonucleoside 5'-diphosphate + [thioredoxin]-disulfide + H2O = a ribonucleoside 5'-diphosphate + [thioredoxin]-dithiol. Its function is as follows. Catalyzes the reduction of ribonucleotides to deoxyribonucleotides. May function to provide a pool of deoxyribonucleotide precursors for DNA repair during oxygen limitation and/or for immediate growth after restoration of oxygen. In Streptomyces avermitilis (strain ATCC 31267 / DSM 46492 / JCM 5070 / NBRC 14893 / NCIMB 12804 / NRRL 8165 / MA-4680), this protein is Vitamin B12-dependent ribonucleotide reductase (nrdJ).